A 159-amino-acid chain; its full sequence is Transcription elongation factor GreA (159 aa).

Residues 46-73 adopt a coiled-coil conformation; the sequence is AEYHAAKEEQSFVEGRIKEIELKLSRMQ.

The protein belongs to the GreA/GreB family.

Necessary for efficient RNA polymerase transcription elongation past template-encoded arresting sites. The arresting sites in DNA have the property of trapping a certain fraction of elongating RNA polymerases that pass through, resulting in locked ternary complexes. Cleavage of the nascent transcript by cleavage factors such as GreA or GreB allows the resumption of elongation from the new 3'terminus. GreA releases sequences of 2 to 3 nucleotides. The polypeptide is Transcription elongation factor GreA (Vesicomyosocius okutanii subsp. Calyptogena okutanii (strain HA)).